A 70-amino-acid polypeptide reads, in one-letter code: Phycocyanin-645 alpha-2 chain (70 aa).

Arg16 contributes to the (2R,3E)-phycocyanobilin binding site. Mesobiliverdin is bound by residues Cys18, Tyr26, and Lys41.

It belongs to the phycoerythrin family. Heterotetramer of 2 different alpha chains and 2 identical beta chains which form 2 alpha-beta heterodimers within the heterotetramer. Contains one phycocyanobilin chromophore, one mesobiliverdin chromophore and one 15,16-dihydrobiliverdin chromophore with binding mediated by both the alpha and beta subunits.

It localises to the plastid. Its subcellular location is the chloroplast thylakoid membrane. Its function is as follows. Light-harvesting photosynthetic tetrapyrrole chromophore-protein from the phycobiliprotein complex. The chain is Phycocyanin-645 alpha-2 chain from Chroomonas sp.